The sequence spans 991 residues: Translation initiation factor IF-2 (991 aa).

3 disordered regions span residues 53 to 85, 97 to 175, and 312 to 395; these read SHGT…KART, VKRD…EAAE, and GIKG…DRGG. Basic and acidic residues-rich tracts occupy residues 97–113 and 125–175; these read VKRD…HDSQ and ELQR…EAAE. The segment covering 323-338 has biased composition (low complexity); sequence AAGAPAPGAAPGAAAK. Residues 339–349 are compositionally biased toward basic and acidic residues; sequence PGEKKSVKSEK. One can recognise a tr-type G domain in the interval 491–658; the sequence is PRPPVVTVMG…QVLLQAEVLE (168 aa). The interval 500 to 507 is G1; the sequence is GHVDHGKT. Residue 500–507 coordinates GTP; the sequence is GHVDHGKT. The interval 525–529 is G2; the sequence is GITQH. The tract at residues 546–549 is G3; the sequence is DTPG. GTP-binding positions include 546–550 and 600–603; these read DTPGH and NKID. The G4 stretch occupies residues 600 to 603; it reads NKID. The G5 stretch occupies residues 636–638; sequence SAK.

Belongs to the TRAFAC class translation factor GTPase superfamily. Classic translation factor GTPase family. IF-2 subfamily.

It is found in the cytoplasm. Its function is as follows. One of the essential components for the initiation of protein synthesis. Protects formylmethionyl-tRNA from spontaneous hydrolysis and promotes its binding to the 30S ribosomal subunits. Also involved in the hydrolysis of GTP during the formation of the 70S ribosomal complex. In Leptothrix cholodnii (strain ATCC 51168 / LMG 8142 / SP-6) (Leptothrix discophora (strain SP-6)), this protein is Translation initiation factor IF-2.